Reading from the N-terminus, the 239-residue chain is Pyrroloquinoline-quinone synthase (239 aa).

It belongs to the PqqC family.

It carries out the reaction 6-(2-amino-2-carboxyethyl)-7,8-dioxo-1,2,3,4,7,8-hexahydroquinoline-2,4-dicarboxylate + 3 O2 = pyrroloquinoline quinone + 2 H2O2 + 2 H2O + H(+). It participates in cofactor biosynthesis; pyrroloquinoline quinone biosynthesis. Ring cyclization and eight-electron oxidation of 3a-(2-amino-2-carboxyethyl)-4,5-dioxo-4,5,6,7,8,9-hexahydroquinoline-7,9-dicarboxylic-acid to PQQ. This is Pyrroloquinoline-quinone synthase from Gluconobacter oxydans (strain 621H) (Gluconobacter suboxydans).